A 662-amino-acid chain; its full sequence is Probable protein phosphatase CG10417 (662 aa).

A PPM-type phosphatase domain is found at 23 to 564; the sequence is AVGASSMQGW…DNMTAVIVQF (542 aa). Residues D57 and G58 each coordinate Mn(2+). Disordered regions lie at residues 219-275 and 288-374; these read DGVA…FKHT and GSND…DEDQ. Composition is skewed to polar residues over residues 238 to 252, 261 to 275, and 288 to 319; these read DSNT…STKN, NDQN…FKHT, and GSND…INSS. 2 positions are modified to phosphoserine: S289 and S306. Positions 320-334 are enriched in acidic residues; it reads QDDEFTDDDADYEEN. The segment covering 337 to 347 has biased composition (polar residues); that stretch reads VKSPDTSSAES. The segment covering 349-374 has biased composition (acidic residues); it reads DCTENDDDGDEDGNEDSDEEETDEDQ. Mn(2+) contacts are provided by D506 and D555. Residues 591 to 609 are compositionally biased toward polar residues; that stretch reads VSHSLNDQSASKRCASQNA. The interval 591-662 is disordered; that stretch reads VSHSLNDQSA…KEVTIIVSSS (72 aa). Phosphoserine is present on residues S592, S594, and S599. Residues 616–637 are compositionally biased toward basic and acidic residues; sequence LEKNNSKRLKTDLEQENIKDRT. T637 is modified (phosphothreonine). Phosphoserine occurs at positions 639 and 641.

Belongs to the PP2C family. It depends on Mg(2+) as a cofactor. The cofactor is Mn(2+).

The catalysed reaction is O-phospho-L-seryl-[protein] + H2O = L-seryl-[protein] + phosphate. The enzyme catalyses O-phospho-L-threonyl-[protein] + H2O = L-threonyl-[protein] + phosphate. The sequence is that of Probable protein phosphatase CG10417 from Drosophila melanogaster (Fruit fly).